Here is a 137-residue protein sequence, read N- to C-terminus: Large ribosomal subunit protein uL16 (137 aa).

This sequence belongs to the universal ribosomal protein uL16 family. Part of the 50S ribosomal subunit.

In terms of biological role, binds 23S rRNA and is also seen to make contacts with the A and possibly P site tRNAs. This chain is Large ribosomal subunit protein uL16, found in Halorhodospira halophila (strain DSM 244 / SL1) (Ectothiorhodospira halophila (strain DSM 244 / SL1)).